A 708-amino-acid chain; its full sequence is F-box protein MAX2 homolog A (708 aa).

The F-box domain maps to 2-49 (ATQLNDLPDVILSNIIAAVTDVRSRNSTSFVCRKWLVLERSTRVSLTL).

In terms of assembly, part of a putative SCF (SKP1/Cullin/F-box) ubiquitin ligase complex. Interacts with DAD2. Interacts with KAI2IA in the presence of (-)-germacrene D. In terms of tissue distribution, mainly expressed in fully expanded leaves, lateral roots, axillary and shoot apex, and, to a lower extent, in internodes and nodes.

The protein localises to the nucleus. Its function is as follows. Component of SCF(ASK-cullin-F-box) E3 ubiquitin ligase complexes, which may mediate the ubiquitination and subsequent proteasomal degradation of target proteins. Is necessary for responses to strigolactones and may be involved in the ubiquitin-mediated degradation of specific proteins that activate axillary growth. Targets probably SMAX1A to degradation upon the formation of an E3 SCF ubiquitin ligase complex (ASK-cullin-F-box) containing MAX2A and KAI2IA in response to (-)-germacrene D in the stigma. This is F-box protein MAX2 homolog A from Petunia hybrida (Petunia).